The primary structure comprises 533 residues: Zinc finger protein 26 (533 aa).

The KRAB domain occupies 14-85; it reads LSFKDISMEF…NAKISRQSCP (72 aa). 13 C2H2-type zinc fingers span residues 174–196, 202–224, 230–252, 258–280, 286–308, 314–336, 342–364, 370–392, 398–420, 426–448, 454–476, 482–504, and 510–532; these read CVCS…LRIH, YECS…QRVH, YSCS…QEIH, YGCS…QRSH, YECS…QRTH, HKCS…IRMH, YQCS…QGVH, YQCG…LRAH, YGCS…RRTH, YECN…QKTH, FKCS…QRVH, and WKCS…RKTH.

Belongs to the krueppel C2H2-type zinc-finger protein family.

The protein resides in the nucleus. Its function is as follows. May be involved in transcriptional regulation. The protein is Zinc finger protein 26 (ZNF26) of Homo sapiens (Human).